The primary structure comprises 881 residues: DNA replication helicase (881 aa).

ATP is bound at residue 90–97 (GNAGSGKS).

This sequence belongs to the herpesviridae helicase family. As to quaternary structure, associates with the primase and the primase-associated factor to form the helicase-primase complex.

Its subcellular location is the host nucleus. Its function is as follows. Component of the helicase/primase complex. Unwinds the DNA at the replication forks and generates single-stranded DNA for both leading and lagging strand synthesis. The primase synthesizes short RNA primers on the lagging strand that the polymerase elongates using dNTPs. Possesses helicase-like motifs and therefore may act as the helicase subunit of the complex. This is DNA replication helicase from Homo sapiens (Human).